The primary structure comprises 365 residues: Endophilin-B1 (365 aa).

N-acetylmethionine is present on methionine 1. The segment at 1 to 30 (MNIMDFNVKKLAADAGTFLSRAVQFTEEKL) is membrane-binding amphipathic helix. Positions 1-37 (MNIMDFNVKKLAADAGTFLSRAVQFTEEKLGQAEKTE) are required for membrane binding. In terms of domain architecture, BAR spans 27 to 261 (EEKLGQAEKT…LGSFPSNYLS (235 aa)). Phosphothreonine; by CDK5 is present on threonine 145. Positions 155–195 (YKTIAKERKLLQNKRLDLDAAKTRLKKAKAAETRNSSEQEL) form a coiled coil. The SH3 domain maps to 305–365 (SGSRKARVLY…VPITYLELLN (61 aa)).

This sequence belongs to the endophilin family. Homodimer, and heterodimer with SH3GLB2. Binds BAX; induction of apoptosis augments BAX binding. Binds DNM1, HTT, AMPH, BIN1 and ARFGAP1. Interacts with UVRAG; UVRAG bridges the interaction to BECN1 indicative for an association with the PI3K complex II (PI3KC3-C2). Phosphorylated at Thr-145 by CDK5; this phosphorylation is required for autophagy induction in starved neurons and facilitates homodimerization. Highly expressed in heart, skeletal muscle, kidney and placenta. Detected at lower levels in brain, colon, thymus, spleen, liver, small intestine, lung and peripheral blood leukocytes.

The protein localises to the cytoplasm. Its subcellular location is the golgi apparatus membrane. The protein resides in the mitochondrion outer membrane. It localises to the cytoplasmic vesicle. It is found in the autophagosome membrane. The protein localises to the midbody. May be required for normal outer mitochondrial membrane dynamics. Required for coatomer-mediated retrograde transport in certain cells. May recruit other proteins to membranes with high curvature. May promote membrane fusion. Involved in activation of caspase-dependent apoptosis by promoting BAX/BAK1 activation. Isoform 1 acts proapoptotic in fibroblasts. Involved in caspase-independent apoptosis during nutrition starvation and involved in the regulation of autophagy. Activates lipid kinase activity of PIK3C3 during autophagy probably by associating with the PI3K complex II (PI3KC3-C2). Associated with PI3KC3-C2 during autophagy may regulate the trafficking of ATG9A from the Golgi complex to the peripheral cytoplasm for the formation of autophagosomes by inducing Golgi membrane tubulation and fragmentation. Involved in regulation of degradative endocytic trafficking and cytokinesis, probably in the context of PI3KC3-C2. Isoform 2 acts antiapoptotic in neuronal cells; involved in maintenance of mitochondrial morphology and promotes neuronal viability. This Homo sapiens (Human) protein is Endophilin-B1 (SH3GLB1).